The chain runs to 356 residues: tRNA-specific 2-thiouridylase MnmA (356 aa).

An ATP-binding site is contributed by 6–13; that stretch reads AVSGGTDS. The Nucleophile role is filled by cysteine 95. Cysteine 95 and cysteine 195 are disulfide-bonded. Residue glycine 119 participates in ATP binding. The tract at residues 145–147 is interaction with tRNA; it reads KDQ. Cysteine 195 serves as the catalytic Cysteine persulfide intermediate. The interval 300–301 is interaction with tRNA; sequence RY.

It belongs to the MnmA/TRMU family.

The protein localises to the cytoplasm. The catalysed reaction is S-sulfanyl-L-cysteinyl-[protein] + uridine(34) in tRNA + AH2 + ATP = 2-thiouridine(34) in tRNA + L-cysteinyl-[protein] + A + AMP + diphosphate + H(+). Functionally, catalyzes the 2-thiolation of uridine at the wobble position (U34) of tRNA, leading to the formation of s(2)U34. This is tRNA-specific 2-thiouridylase MnmA from Oleidesulfovibrio alaskensis (strain ATCC BAA-1058 / DSM 17464 / G20) (Desulfovibrio alaskensis).